Here is a 322-residue protein sequence, read N- to C-terminus: Pantothenate kinase (322 aa).

100 to 107 (GSVAVGKS) is a binding site for ATP.

Belongs to the prokaryotic pantothenate kinase family.

Its subcellular location is the cytoplasm. The enzyme catalyses (R)-pantothenate + ATP = (R)-4'-phosphopantothenate + ADP + H(+). It functions in the pathway cofactor biosynthesis; coenzyme A biosynthesis; CoA from (R)-pantothenate: step 1/5. This Brucella abortus (strain 2308) protein is Pantothenate kinase.